We begin with the raw amino-acid sequence, 508 residues long: Photosystem II CP47 reaction center protein (508 aa).

6 helical membrane-spanning segments follow: residues 21–36, 101–115, 140–156, 203–218, 237–252, and 457–472; these read AVHL…WAGS, IVLS…IWHW, GIHL…FGAF, IAAG…FHLC, VLSS…AFVV, and CFAL…HGAR.

It belongs to the PsbB/PsbC family. PsbB subfamily. In terms of assembly, PSII is composed of 1 copy each of membrane proteins PsbA, PsbB, PsbC, PsbD, PsbE, PsbF, PsbH, PsbI, PsbJ, PsbK, PsbL, PsbM, PsbT, PsbX, PsbY, PsbZ, Psb30/Ycf12, at least 3 peripheral proteins of the oxygen-evolving complex and a large number of cofactors. It forms dimeric complexes. Binds multiple chlorophylls. PSII binds additional chlorophylls, carotenoids and specific lipids. is required as a cofactor.

The protein resides in the plastid. The protein localises to the chloroplast thylakoid membrane. Its function is as follows. One of the components of the core complex of photosystem II (PSII). It binds chlorophyll and helps catalyze the primary light-induced photochemical processes of PSII. PSII is a light-driven water:plastoquinone oxidoreductase, using light energy to abstract electrons from H(2)O, generating O(2) and a proton gradient subsequently used for ATP formation. The sequence is that of Photosystem II CP47 reaction center protein from Chlorella vulgaris (Green alga).